The chain runs to 128 residues: CD59 glycoprotein (128 aa).

A signal peptide spans 1–25 (MGIQGGSVLFGLLLVLAVFCHSGNS). The 83-residue stretch at 26–108 (LQCYSCPYPT…ALKNGGTTLS (83 aa)) folds into the UPAR/Ly6 domain. 5 disulfide bridges follow: cysteine 28–cysteine 51, cysteine 31–cysteine 38, cysteine 44–cysteine 64, cysteine 70–cysteine 88, and cysteine 89–cysteine 94. Asparagine 43 carries N-linked (GlcNAc...) asparagine glycosylation. Residue asparagine 102 is the site of GPI-anchor amidated asparagine attachment. A propeptide spans 103–128 (GGTTLSKKTVLLLVIPFLVAAWSLHP) (removed in mature form).

Interacts with T-cell surface antigen CD2. In terms of processing, N- and O-glycosylated.

The protein resides in the cell membrane. It localises to the secreted. Functionally, potent inhibitor of the complement membrane attack complex (MAC) action, which protects self-cells from damage during complement activation. Acts by binding to the beta-haipins of C8 (C8A and C8B) components of the assembling MAC, forming an intermolecular beta-sheet that prevents incorporation of the multiple copies of C9 required for complete formation of the osmolytic pore. The chain is CD59 glycoprotein from Aotus trivirgatus (Three-striped night monkey).